A 429-amino-acid polypeptide reads, in one-letter code: MSKSLQAIRGMNDILPEQTPVWRYFEGTVSRLLDNYGYKQIRMPIVEFTELFKRSIGEVTDIVEKEMYTFEDRNGDSLTLRPEGTAACVRAVLEHGITGGGQVQKLWYIGPMFRHERPQKGRYRQFHQIGLEVFNLDGPDIDAELIIMTWRLWGELGIRDAVKLELNSLGTSESRGRYREALVEYLSAHHDKLDEDSQRRLKTNPLRVLDTKNADTQAVLVDAPKMADYLDDESRAHFKGLKARLDAVGIPYVLNPKLVRGLDYYSKTVFEWVTDKLGAQGTVCAGGRYDGLVEQMGGKPTPGVGFAMGIERLVLLLETLEQIPEEISRQVDVYLCAFGEEAELAGLALAERVRDQLPNLRLQVNAGAGSFKSQFKKADKSGALYALILGDDEMAQQVVGFKPLRGQGEQQSIAWDALAAHLATCVVQG.

It belongs to the class-II aminoacyl-tRNA synthetase family. In terms of assembly, homodimer.

Its subcellular location is the cytoplasm. The enzyme catalyses tRNA(His) + L-histidine + ATP = L-histidyl-tRNA(His) + AMP + diphosphate + H(+). This is Histidine--tRNA ligase from Pseudomonas fluorescens (strain Pf0-1).